Reading from the N-terminus, the 545-residue chain is Membrane protein insertase YidC (545 aa).

A run of 6 helical transmembrane segments spans residues 10–30, 319–339, 341–361, 407–427, 467–487, and 502–522; these read AVYLSLFFIGIFMLLDDFLFS, LLYFLQVPMQLIMQIFYNVIP, WGLSIMFLTIVVRILIFPLTF, IGGCFPILLQLPVFFALYGLV, ILPFIMMITQLLSTIVSSNVS, and MPIMFFFILYDMPSGLLIYWI.

The protein belongs to the OXA1/ALB3/YidC family. Type 1 subfamily. As to quaternary structure, interacts with the Sec translocase complex via SecD. Specifically interacts with transmembrane segments of nascent integral membrane proteins during membrane integration.

The protein resides in the cell inner membrane. In terms of biological role, required for the insertion and/or proper folding and/or complex formation of integral membrane proteins into the membrane. Involved in integration of membrane proteins that insert both dependently and independently of the Sec translocase complex, as well as at least some lipoproteins. Aids folding of multispanning membrane proteins. The sequence is that of Membrane protein insertase YidC from Borrelia duttonii (strain Ly).